Consider the following 103-residue polypeptide: Phosphoribosyl-ATP pyrophosphatase (103 aa).

The segment at 79–103 (SVQAELERREGKLSTTRDRKEIDEL) is disordered. The span at 83–103 (ELERREGKLSTTRDRKEIDEL) shows a compositional bias: basic and acidic residues.

The protein belongs to the PRA-PH family.

The protein localises to the cytoplasm. The catalysed reaction is 1-(5-phospho-beta-D-ribosyl)-ATP + H2O = 1-(5-phospho-beta-D-ribosyl)-5'-AMP + diphosphate + H(+). It functions in the pathway amino-acid biosynthesis; L-histidine biosynthesis; L-histidine from 5-phospho-alpha-D-ribose 1-diphosphate: step 2/9. This is Phosphoribosyl-ATP pyrophosphatase from Listeria welshimeri serovar 6b (strain ATCC 35897 / DSM 20650 / CCUG 15529 / CIP 8149 / NCTC 11857 / SLCC 5334 / V8).